The chain runs to 328 residues: Surface antigen CRP170 (328 aa).

2 consecutive repeats follow at residues 38–102 (NAPC…CKKC) and 103–167 (NAPC…CKKC).

The protein is Surface antigen CRP170 of Giardia intestinalis (Giardia lamblia).